We begin with the raw amino-acid sequence, 156 residues long: Arginine repressor (156 aa).

Belongs to the ArgR family.

The protein resides in the cytoplasm. The protein operates within amino-acid biosynthesis; L-arginine biosynthesis [regulation]. Regulates arginine biosynthesis genes. The polypeptide is Arginine repressor (Vibrio vulnificus (strain CMCP6)).